A 178-amino-acid polypeptide reads, in one-letter code: Putative metal-dependent hydrolase GK0616 (178 aa).

His-68, His-161, and His-165 together coordinate Zn(2+).

The protein belongs to the metal hydrolase YfiT family. Homodimer. It depends on Zn(2+) as a cofactor.

Its subcellular location is the cytoplasm. Its function is as follows. Possible metal-dependent hydrolase. This chain is Putative metal-dependent hydrolase GK0616, found in Geobacillus kaustophilus (strain HTA426).